An 842-amino-acid chain; its full sequence is Probable receptor-like protein kinase At5g61350 (842 aa).

Positions 1–27 (MGGDFRHFSSHVSLLLLFLLIVKSSSS) are cleaved as a signal peptide. The Extracellular portion of the chain corresponds to 28 to 425 (FTPADNYLID…IGGMSSKKLA (398 aa)). N-linked (GlcNAc...) asparagine glycosylation is found at Asn81, Asn125, Asn252, Asn294, Asn359, and Asn365. Residues 426–446 (IAGIGFVMALTAFLGVVVLLV) traverse the membrane as a helical segment. Residues 447–842 (RWQRRPKDWQ…EMQSPSHSIP (396 aa)) are Cytoplasmic-facing. The region spanning 525-803 (FDENAVCGVG…GDVLWNLEYA (279 aa)) is the Protein kinase domain. Residues 531–539 (CGVGGFGKV) and Lys553 contribute to the ATP site. Asp655 (proton acceptor) is an active-site residue.

The protein belongs to the protein kinase superfamily. Ser/Thr protein kinase family.

It is found in the membrane. The sequence is that of Probable receptor-like protein kinase At5g61350 from Arabidopsis thaliana (Mouse-ear cress).